Consider the following 277-residue polypeptide: Large ribosomal subunit protein uL2 (277 aa).

Disordered stretches follow at residues 36 to 55 (PLPK…RHHG) and 213 to 277 (WKGI…RKKK).

It belongs to the universal ribosomal protein uL2 family. Part of the 50S ribosomal subunit. Forms a bridge to the 30S subunit in the 70S ribosome.

Functionally, one of the primary rRNA binding proteins. Required for association of the 30S and 50S subunits to form the 70S ribosome, for tRNA binding and peptide bond formation. It has been suggested to have peptidyltransferase activity; this is somewhat controversial. Makes several contacts with the 16S rRNA in the 70S ribosome. The polypeptide is Large ribosomal subunit protein uL2 (Staphylococcus aureus (strain bovine RF122 / ET3-1)).